Reading from the N-terminus, the 125-residue chain is Conopressin-conophysin, isoform 1 (125 aa).

The signal sequence occupies residues methionine 1–alanine 22. A disulfide bridge connects residues cysteine 23 and cysteine 28. Position 31 is a glycine amide (glycine 31). Residues glycine 32–isoleucine 39 constitute a propeptide that is removed on maturation. Intrachain disulfides connect cysteine 45-cysteine 85, cysteine 48-cysteine 59, cysteine 53-cysteine 75, cysteine 60-cysteine 65, cysteine 92-cysteine 112, cysteine 104-cysteine 124, and cysteine 113-cysteine 118.

The protein belongs to the vasopressin/oxytocin family. Expressed by the venom gland.

The protein localises to the secreted. Its function is as follows. Targets vasopressin-oxytocin related receptors. This is Conopressin-conophysin, isoform 1 from Conus monile (Necklace cone).